A 125-amino-acid chain; its full sequence is Large ribosomal subunit protein bL12 (125 aa).

Residues 96 to 125 are disordered; the sequence is PAPVKEGATKDEAEEIKKKIEEAGGTAELK. Over residues 102-117 the composition is skewed to basic and acidic residues; that stretch reads GATKDEAEEIKKKIEE.

Belongs to the bacterial ribosomal protein bL12 family. In terms of assembly, homodimer. Part of the ribosomal stalk of the 50S ribosomal subunit. Forms a multimeric L10(L12)X complex, where L10 forms an elongated spine to which 2 to 4 L12 dimers bind in a sequential fashion. Binds GTP-bound translation factors.

Forms part of the ribosomal stalk which helps the ribosome interact with GTP-bound translation factors. Is thus essential for accurate translation. The sequence is that of Large ribosomal subunit protein bL12 from Alcanivorax borkumensis (strain ATCC 700651 / DSM 11573 / NCIMB 13689 / SK2).